The primary structure comprises 551 residues: Chaperonin GroEL (551 aa).

ATP-binding positions include 30-33, Lys-51, 87-91, Gly-415, and Asp-496; these read TLGP and DGTTT.

The protein belongs to the chaperonin (HSP60) family. As to quaternary structure, forms a cylinder of 14 subunits composed of two heptameric rings stacked back-to-back. Interacts with the co-chaperonin GroES.

The protein localises to the cytoplasm. It catalyses the reaction ATP + H2O + a folded polypeptide = ADP + phosphate + an unfolded polypeptide.. Functionally, together with its co-chaperonin GroES, plays an essential role in assisting protein folding. The GroEL-GroES system forms a nano-cage that allows encapsulation of the non-native substrate proteins and provides a physical environment optimized to promote and accelerate protein folding. This Maricaulis maris (strain MCS10) (Caulobacter maris) protein is Chaperonin GroEL.